We begin with the raw amino-acid sequence, 724 residues long: Protein BCH1 (724 aa).

Over residues Thr51 to Asn65 the composition is skewed to low complexity. Residues Thr51–Pro71 form a disordered region. A CHS5-binding region spans residues Leu711–Asn724.

The protein belongs to the CHAPS family. Component of the CHS5/6 complex composed of the 4 CHAPS proteins BCH1, BCH2, BUD7, and CHS6 as well as at least CHS5 and GTP-bound ARF1. The complex interacts with the cargo protein CHS3.

It localises to the golgi apparatus. The protein localises to the trans-Golgi network membrane. Member of the CHS5-ARF1P-binding proteins (CHAPS) which mediates export of specific cargo proteins, including chitin synthase CHS3. This chain is Protein BCH1 (BCH1), found in Saccharomyces cerevisiae (strain ATCC 204508 / S288c) (Baker's yeast).